A 432-amino-acid polypeptide reads, in one-letter code: MDPLNATGMDAFTAIHLNASWSADSGYSLAAIASIAALVSFLILFTVVGNILVVIAVLTSRALKAPQNLFLVSLATADILVATLVMPFSLANELMGYWYFGKVWCGIYLALDVLFCTSSIVHLCAISLDRYWSVTQAVEYNLKRTPKRVKCIIVIVWLISAFISSPPLLSIDSNNYISSQPQCMLNDDTWYILSSSMASFFAPCLIMILVYIRIYQVAKTRTRSMSGKEPRPDGVTQTENGLNKANSPCHGDRENGHCQCPPTPSQRTVTIGQQTDDADMDESFSSEGKGHKPQRQDSQRAKRPGLKKSSISKQSARISRVSNKSVDLFASRRKRRRSSIAEKKVSQAREKRFTFVLAVVMGVFVVCWFPFFFSYSLHAVCRDYCKIPDTLFKFFWIGYCNSSLNPAIYTIFNRDFRRAFQKILCKSWKKSF.

Residues 1–32 (MDPLNATGMDAFTAIHLNASWSADSGYSLAAI) lie on the Extracellular side of the membrane. N-linked (GlcNAc...) asparagine glycans are attached at residues Asn5 and Asn18. The chain crosses the membrane as a helical span at residues 33 to 57 (ASIAALVSFLILFTVVGNILVVIAV). The Cytoplasmic portion of the chain corresponds to 58 to 69 (LTSRALKAPQNL). The helical transmembrane segment at 70 to 95 (FLVSLATADILVATLVMPFSLANELM) threads the bilayer. At 96-105 (GYWYFGKVWC) the chain is on the extracellular side. A disulfide bridge links Cys105 with Cys183. The helical transmembrane segment at 106–128 (GIYLALDVLFCTSSIVHLCAISL) threads the bilayer. Over 129-149 (DRYWSVTQAVEYNLKRTPKRV) the chain is Cytoplasmic. The helical transmembrane segment at 150–172 (KCIIVIVWLISAFISSPPLLSID) threads the bilayer. Residues 173–188 (SNNYISSQPQCMLNDD) are Extracellular-facing. Residues 189–212 (TWYILSSSMASFFAPCLIMILVYI) form a helical membrane-spanning segment. Residues 213–356 (RIYQVAKTRT…QAREKRFTFV (144 aa)) lie on the Cytoplasmic side of the membrane. A disordered region spans residues 222-319 (TRSMSGKEPR…SISKQSARIS (98 aa)). 2 stretches are compositionally biased toward polar residues: residues 235–246 (VTQTENGLNKAN) and 265–275 (SQRTVTIGQQT). Residues 288–300 (GKGHKPQRQDSQR) are compositionally biased toward basic and acidic residues. Over residues 309–319 (SSISKQSARIS) the composition is skewed to polar residues. Residues 357–380 (LAVVMGVFVVCWFPFFFSYSLHAV) form a helical membrane-spanning segment. Residues 381–393 (CRDYCKIPDTLFK) lie on the Extracellular side of the membrane. The helical transmembrane segment at 394–413 (FFWIGYCNSSLNPAIYTIFN) threads the bilayer. Residues 414-432 (RDFRRAFQKILCKSWKKSF) lie on the Cytoplasmic side of the membrane.

The protein belongs to the G-protein coupled receptor 1 family.

It localises to the cell membrane. Alpha-2 adrenergic receptors mediate the catecholamine-induced inhibition of adenylate cyclase through the action of G proteins. This chain is Alpha-2 adrenergic receptor, found in Labrus ossifagus (Cuckoo wrasse).